We begin with the raw amino-acid sequence, 245 residues long: 2,3,4,5-tetrahydropyridine-2,6-dicarboxylate N-acetyltransferase (245 aa).

The protein belongs to the transferase hexapeptide repeat family. DapH subfamily.

The enzyme catalyses (S)-2,3,4,5-tetrahydrodipicolinate + acetyl-CoA + H2O = L-2-acetamido-6-oxoheptanedioate + CoA. The protein operates within amino-acid biosynthesis; L-lysine biosynthesis via DAP pathway; LL-2,6-diaminopimelate from (S)-tetrahydrodipicolinate (acetylase route): step 1/3. Functionally, catalyzes the transfer of an acetyl group from acetyl-CoA to tetrahydrodipicolinate. This chain is 2,3,4,5-tetrahydropyridine-2,6-dicarboxylate N-acetyltransferase, found in Methanopyrus kandleri (strain AV19 / DSM 6324 / JCM 9639 / NBRC 100938).